Consider the following 156-residue polypeptide: Snaclec 2 (156 aa).

The first 21 residues, 1-21 (MGRFIFLSSGLLVVFLSLSGA), serve as a signal peptide directing secretion. 3 cysteine pairs are disulfide-bonded: C25–C36, C53–C150, and C125–C142. Residues 32–151 (FDQHCYRAFD…CGDDYPFVCK (120 aa)) form the C-type lectin domain.

Belongs to the snaclec family. Heterodimer; disulfide-linked. In terms of tissue distribution, expressed by the venom gland.

Its subcellular location is the secreted. Its function is as follows. Interferes with one step of hemostasis (modulation of platelet aggregation, or coagulation cascade, for example). This Bitis gabonica (Gaboon adder) protein is Snaclec 2.